A 159-amino-acid polypeptide reads, in one-letter code: Large ribosomal subunit protein mL50 (159 aa).

Belongs to the mitochondrion-specific ribosomal protein mL50 family. In terms of assembly, component of the mitochondrial ribosome large subunit (39S) which comprises a 16S rRNA and about 50 distinct proteins.

Its subcellular location is the mitochondrion. In Bos taurus (Bovine), this protein is Large ribosomal subunit protein mL50 (MRPL50).